Reading from the N-terminus, the 943-residue chain is Protein translocase subunit SecA (943 aa).

Residues Q77, 95 to 99 (GEGKT), and D484 each bind ATP.

It belongs to the SecA family. Monomer and homodimer. Part of the essential Sec protein translocation apparatus which comprises SecA, SecYEG and auxiliary proteins SecDF. Other proteins may also be involved.

It localises to the cell membrane. It is found in the cytoplasm. It carries out the reaction ATP + H2O + cellular proteinSide 1 = ADP + phosphate + cellular proteinSide 2.. Part of the Sec protein translocase complex. Interacts with the SecYEG preprotein conducting channel. Has a central role in coupling the hydrolysis of ATP to the transfer of proteins into and across the cell membrane, serving as an ATP-driven molecular motor driving the stepwise translocation of polypeptide chains across the membrane. The chain is Protein translocase subunit SecA from Mesoplasma florum (strain ATCC 33453 / NBRC 100688 / NCTC 11704 / L1) (Acholeplasma florum).